The primary structure comprises 403 residues: MADSVERLRQRVEELEQELARERTRRSGGDGHCGRTRIQEMSDEVLDSNPYSRLMALKRMGIVSDYKKIRTYAVAIVGVGGVGSVTAEMLTRCGIGKLLLFDYDKVELANMNRLFFQPYQAGLSKVHAAEHTLRNINPDVLFEVHNYNITTVEHFEHFMNRISNGGLEEGQPVDLVLSCVDNFEARMAINTACNELGQTWMESGVSENAVSGHIQLMIPGESACFACAPPLVVASNIDEKTLKREGVCAASLPTTMGVVAGILVQNVLKFLLKFGTVSFYLGYNAMQDFFPTMFMKPNPQCDDKNCRKQQEEYKKRAAALPTQEAEPQEEAEVVHEDNEWGIELVSEVSEEELKNSSGPVPTLPEGITVAYTVPKKTEDSASEVTVEDSGESLEDLMARMKNM.

Positions 81, 102, 125, 148, and 182 each coordinate ATP. Zn(2+) is bound by residues Cys-224 and Cys-227. The active-site Glycyl thioester intermediate is Cys-248. Residues Cys-301 and Cys-306 each contribute to the Zn(2+) site. The UFM1-interacting sequence (UIS) motif lies at 333–345; sequence VVHEDNEWGIELV. Residues 346-376 are linker; the sequence is SEVSEEELKNSSGPVPTLPEGITVAYTVPKK. Ser-357 and Ser-392 each carry phosphoserine. The UFC1-binding sequence (UFC) motif lies at 388 to 403; the sequence is DSGESLEDLMARMKNM.

It belongs to the ubiquitin-activating E1 family. UBA5 subfamily. As to quaternary structure, homodimer; homodimerization is required for UFM1 activation. Interacts (via UIS motif) with UFM1; binds UFM1 via a trans-binding mechanism in which UFM1 interacts with distinct sites in both subunits of the UBA5 homodimer. Interacts (via C-terminus) with UFC1. Interacts (via UIS motif) with GABARAPL2 and, with lower affinity, with GABARAP and GABARAPL1.

The protein localises to the cytoplasm. The protein resides in the nucleus. It localises to the endoplasmic reticulum membrane. It is found in the golgi apparatus. In terms of biological role, E1-like enzyme which specifically catalyzes the first step in ufmylation. Activates UFM1 by first adenylating its C-terminal glycine residue with ATP, and thereafter linking this residue to the side chain of a cysteine residue in E1, yielding a UFM1-E1 thioester and free AMP. Activates UFM1 via a trans-binding mechanism, in which UFM1 interacts with distinct sites in both subunits of the UBA5 homodimer. Trans-binding also promotes stabilization of the UBA5 homodimer, and enhances ATP-binding. Transfer of UFM1 from UBA5 to the E2-like enzyme UFC1 also takes place using a trans mechanism. Ufmylation plays a key role in various processes, such as ribosome recycling, response to DNA damage, interferon response or reticulophagy (also called ER-phagy). Ufmylation is essential for erythroid differentiation of both megakaryocytes and erythrocytes. This Mus musculus (Mouse) protein is Ubiquitin-like modifier-activating enzyme 5.